We begin with the raw amino-acid sequence, 88 residues long: ATP synthase epsilon chain (88 aa).

This sequence belongs to the ATPase epsilon chain family. In terms of assembly, F-type ATPases have 2 components, CF(1) - the catalytic core - and CF(0) - the membrane proton channel. CF(1) has five subunits: alpha(3), beta(3), gamma(1), delta(1), epsilon(1). CF(0) has three main subunits: a, b and c.

Its subcellular location is the cell inner membrane. Its function is as follows. Produces ATP from ADP in the presence of a proton gradient across the membrane. The chain is ATP synthase epsilon chain (atpC) from Chlorobium limicola.